A 296-amino-acid chain; its full sequence is Chelated iron transport system membrane protein YfeB (296 aa).

Residues Leu-11–Leu-246 enclose the ABC transporter domain. Residue Gly-44–Ser-51 coordinates ATP. The tract at residues Val-276–Ser-296 is disordered. Residues Pro-286–Ser-296 show a composition bias toward polar residues.

Belongs to the ABC transporter superfamily.

It localises to the cell inner membrane. Its function is as follows. Part of an ATP-driven transport system YfeABCD for chelated iron. In Yersinia pestis, this protein is Chelated iron transport system membrane protein YfeB (yfeB).